The sequence spans 334 residues: Aromatic O-demethylase, reductase subunit (334 aa).

In terms of domain architecture, 2Fe-2S ferredoxin-type spans 1–91 (MTFAVSVGGR…DTEVRSTADA (91 aa)). [2Fe-2S] cluster contacts are provided by Cys35, Cys40, Cys43, and Cys75. One can recognise an FAD-binding FR-type domain in the interval 98-198 (LRDLTATVLE…TGPLGDFHLP (101 aa)). Residues 145–148 (RQYS), 162–164 (HVR), 170–172 (VAT), Thr215, Phe330, and Ser334 contribute to the FAD site.

Monomer. Forms a heterodimer with GcoA. It depends on FAD as a cofactor. [2Fe-2S] cluster is required as a cofactor.

The enzyme catalyses 2 oxidized [cytochrome P450] + NADH = 2 reduced [cytochrome P450] + NAD(+) + H(+). The protein operates within aromatic compound metabolism. Functionally, part of a two-component P450 system that efficiently O-demethylates diverse aromatic substrates such as guaiacol and a wide variety of lignin-derived monomers. Is likely involved in lignin degradation, allowing Amycolatopsis sp. ATCC 39116 to catabolize plant biomass. GcoB transfers electrons from NADH to the cytochrome P450 subunit GcoA. Highly prefers NADH over NADPH as the electron donor. This chain is Aromatic O-demethylase, reductase subunit, found in Amycolatopsis sp. (strain ATCC 39116 / 75iv2).